A 313-amino-acid chain; its full sequence is Caffeic acid 3-O-methyltransferase (313 aa).

A substrate-binding site is contributed by Ile112–Phe118. The segment at Ala144–Met162 is substrate binding. Residues Gly190, Asp213, Asp233, Met234, and Lys247 each coordinate S-adenosyl-L-methionine. His251 serves as the catalytic Proton acceptor.

It belongs to the class I-like SAM-binding methyltransferase superfamily. Cation-independent O-methyltransferase family. COMT subfamily. Homodimer.

It catalyses the reaction (E)-caffeate + S-adenosyl-L-methionine = (E)-ferulate + S-adenosyl-L-homocysteine + H(+). It functions in the pathway aromatic compound metabolism; phenylpropanoid biosynthesis. Functionally, catalyzes the conversion of caffeic acid to ferulic acid and of 5-hydroxyferulic acid to sinapic acid. The resulting products may subsequently be converted to the corresponding alcohols that are incorporated into lignins. This is Caffeic acid 3-O-methyltransferase (COMT1) from Eucalyptus globulus (Tasmanian blue gum).